The following is a 455-amino-acid chain: Protein U54 (455 aa).

The protein belongs to the herpesviridae UL82 family.

The chain is Protein U54 (U54) from Homo sapiens (Human).